The sequence spans 312 residues: tRNA pseudouridine synthase B (312 aa).

D37 functions as the Nucleophile in the catalytic mechanism.

This sequence belongs to the pseudouridine synthase TruB family. Type 1 subfamily.

It carries out the reaction uridine(55) in tRNA = pseudouridine(55) in tRNA. Its function is as follows. Responsible for synthesis of pseudouridine from uracil-55 in the psi GC loop of transfer RNAs. This is tRNA pseudouridine synthase B from Deinococcus geothermalis (strain DSM 11300 / CIP 105573 / AG-3a).